Consider the following 372-residue polypeptide: Meiotic drive suppressor wtf18 (372 aa).

Helical transmembrane passes span 86–106 (FLLR…TAWV), 120–140 (AFSV…FCFF), 153–173 (VTVI…AQCV), 197–217 (DLVV…FGCV), 233–253 (CSIS…IWTL), and 257–277 (LFGL…TKGL).

The protein belongs to the WTF family. As to quaternary structure, homomer. Interacts with other proteins that exhibit high sequence similarity.

It localises to the spore membrane. The protein localises to the vacuole membrane. In terms of biological role, acts as a suppressor component of the dual wtf meiotic drive system, and can suppress but not confer meiotic drive by compatible poisons. Wtf meiotic drive systems promote unequal transmission of alleles from the parental zygote to progeny spores by encoding a poison and an antidote from the same locus; the poison is trans-acting and forms toxic aggregates in all spores within an ascus, wherease the antidote is spore-specific and targets aggregates for degradation by the vacuole. Meiotic drive by wtf systems therefore lead to poisoning of all progeny that do not inherit the dual poison/antidote allele, or express a compatible antidote. In Schizosaccharomyces pombe (strain 972 / ATCC 24843) (Fission yeast), this protein is Meiotic drive suppressor wtf18.